The chain runs to 184 residues: MEDYKAFLDEKMSKVLLSLDNEYKTLRTGRISSNIFDKIFIQYHGQRTPITQVSSIRIPEARLVVIQPWDKTILNKIEQAILNSDLSMNPSSDGSVIRIKVPALTSERRQDIVKHAKKIAEEHKISTRNIRQDLNNKVKKQEKESEITEDSLKRILDDIQKSTDIYIKKIDAILESKIQEIMEV.

The protein belongs to the RRF family.

Its subcellular location is the cytoplasm. Responsible for the release of ribosomes from messenger RNA at the termination of protein biosynthesis. May increase the efficiency of translation by recycling ribosomes from one round of translation to another. This is Ribosome-recycling factor from Borreliella afzelii (strain PKo) (Borrelia afzelii).